Reading from the N-terminus, the 230-residue chain is Large ribosomal subunit protein uL1 (230 aa).

This sequence belongs to the universal ribosomal protein uL1 family. Part of the 50S ribosomal subunit.

Binds directly to 23S rRNA. The L1 stalk is quite mobile in the ribosome, and is involved in E site tRNA release. In terms of biological role, protein L1 is also a translational repressor protein, it controls the translation of the L11 operon by binding to its mRNA. In Leptospira borgpetersenii serovar Hardjo-bovis (strain L550), this protein is Large ribosomal subunit protein uL1.